Here is a 782-residue protein sequence, read N- to C-terminus: MQKQIPQMVDPTLAEMGKNLDEAMKILEDNQRPSEEEKDGKKYTRKDIPGPLQGSGQNMVSVLQLVQNLMHDDEEEQSPSLRRIQNVGEQGHMALLGHSLAAYISVLDREHLRKLTTRILSDTTLWLCRLFRYDNGSAYYHEDDREGLLKVCRLVIHSRYEDYTTDGFNVLYNKLPVIYISAASRPGLGQSVCNQLGLPLSCLCRVPCNTMFGSQHEMDVALLDRLIKDDIQSGKCPLLLVANAGTPGAGHTDKLGRLKELCDQYNIWLHVEGVNLATLALGYVSSSVLAATKCDSMTLTLGPWLGLPAVPAVTLYRHEDPSLSLAAGLTSSQPVEKLRALPLWLSLQYLGHSGIVERIKHASQLSQKLLENLKNLSPVKTPVENDGSSPVVVFRFVYEGCKSDSTLNLSTIERDSDALNQWLGDQLAALVPSSGVDIVELEDEGTCVRFNPLMTCAVLGTTAEDVEQLVACLRMKIPVLENTLRLKEEFRQEVERIAGLSYINDYSWAGLGVLRYEQFSEEQDAAKREADLEKITVALLKKLNELETDLTFCSGPEFGAEKNCIYIGMASEDLDVSELVETITAMGREIEENSRLLENMTEVVRKGILEAEVQLNKANEERLLEEGVLRQIPLVGSMLNWLSPVQATPKGRTFNLTAGSLETTEMTYISKAQTTGLTPPPTPTSAHGKRQAGQKLFKRLSRNSDAMSETSSISHLEEVESLEALPMPEYDSSAAENSAMGEPFATAEQSSTPSIVPTETSSEGSQEPSIPSANTAESDSLR.

Residues 26–48 are compositionally biased toward basic and acidic residues; sequence ILEDNQRPSEEEKDGKKYTRKDI. Disordered stretches follow at residues 26–56, 673–695, 702–721, and 726–782; these read ILEDNQRPSEEEKDGKKYTRKDIPGPLQGSG, QTTGLTPPPTPTSAHGKRQAGQK, RNSDAMSETSSISHLEEVES, and PMPE…DSLR. Composition is skewed to polar residues over residues 703–714 and 747–782; these read NSDAMSETSSIS and AEQSSTPSIVPTETSSEGSQEPSIPSANTAESDSLR.

This sequence belongs to the group II decarboxylase family. Pyridoxal 5'-phosphate serves as cofactor.

In Xenopus laevis (African clawed frog), this protein is Pyridoxal-dependent decarboxylase domain-containing protein 1 (pdxdc1).